Here is a 328-residue protein sequence, read N- to C-terminus: Phosphate acyltransferase (328 aa).

This sequence belongs to the PlsX family. Homodimer. Probably interacts with PlsY.

It localises to the cytoplasm. The enzyme catalyses a fatty acyl-[ACP] + phosphate = an acyl phosphate + holo-[ACP]. Its pathway is lipid metabolism; phospholipid metabolism. Functionally, catalyzes the reversible formation of acyl-phosphate (acyl-PO(4)) from acyl-[acyl-carrier-protein] (acyl-ACP). This enzyme utilizes acyl-ACP as fatty acyl donor, but not acyl-CoA. This chain is Phosphate acyltransferase, found in Pseudothermotoga lettingae (strain ATCC BAA-301 / DSM 14385 / NBRC 107922 / TMO) (Thermotoga lettingae).